A 525-amino-acid chain; its full sequence is Ubiquitin carboxyl-terminal hydrolase 22 (525 aa).

A UBP-type zinc finger spans residues 21 to 138 (PGCSHLGSFK…KEEQRKAWKM (118 aa)). Cys-23, His-25, Cys-63, Cys-66, Cys-76, Cys-79, Cys-84, His-89, His-93, His-99, Cys-112, and Cys-115 together coordinate Zn(2+). Lys-129 is modified (N6-acetyllysine). Thr-147 carries the phosphothreonine; by CDK1 modification. Residues 176–520 (RGLINLGNTC…EGYLLFYHKQ (345 aa)) enclose the USP domain. Residue Cys-185 is the Nucleophile of the active site. Ser-237 is subject to Phosphoserine; by CDK1. His-479 (proton acceptor) is an active-site residue.

The protein belongs to the peptidase C19 family. UBP8 subfamily. As to quaternary structure, component of some SAGA transcription coactivator-HAT complexes, at least composed of ATXN7, ATXN7L3, ENY2, GCN5L2, SUPT3H, TAF10, TRRAP and USP22. Within the SAGA complex, ATXN7L3, ENY2 and USP22 form a subcomplex required for histone deubiquitination. Interacts directly with ATXN7L3; leading to its recruitment to the SAGA complex. Interacts with ATXN7L3 and weakly with ATXN7L3B. Interacts with MED1. In terms of processing, phosphorylated in G2/M phase, but not in G1 phase by CDK1. Ubiquitinated and subsequently degraded in a CDC20-dependent manner. In terms of tissue distribution, moderately expressed in various tissues including heart and skeletal muscle, and weakly expressed in lung and liver.

It is found in the nucleus. The protein resides in the cytoplasm. The enzyme catalyses Thiol-dependent hydrolysis of ester, thioester, amide, peptide and isopeptide bonds formed by the C-terminal Gly of ubiquitin (a 76-residue protein attached to proteins as an intracellular targeting signal).. In terms of biological role, deubiquitinase that plays a role in several cellular processes including transcriptional regulation, cell cycle progression or innate immunity. As part of the transcription regulatory histone acetylation (HAT) complex SAGA, catalyzes the deubiquitination of both histones H2A and H2B, thereby acting as a transcriptional coactivator. Recruited to specific gene promoters by activators such as MYC, where it is required for transcription. Facilitates cell-cycle progression by stabilizing CCNB1 and antagonizing its proteasome-mediated degradation in a cell cycle-specific manner. Modulates cell cycle progression and apoptosis also by antagonizing TP53 transcriptional activation through deacetylase SIRT1 stabilization. Plays multiple roles in immunity and inflammation. Participates in antiviral response by deubiquitinating the importin KPNA2, leading to IRF3 nuclear translocation and subsequent type I interferon production. Acts as a central regulator of type III IFN signaling by negatively regulating STING1 activation and ubiquitination. Inhibits NLRP3 inflammasome activation by promoting NLRP3 degradation through ATG5-dependent autophagy. Deubiquitinates CD274 to induce its stabilization and thereby participates in maintenance of immune tolerance to self. Controls necroptotic cell death by regulating RIPK3 phosphorylation and ubiquitination. During bacterial infection, promotes pro-inflammatory response by targeting TRAF6 and removing its 'Lys-48'-linked polyubiquitination. The chain is Ubiquitin carboxyl-terminal hydrolase 22 (USP22) from Homo sapiens (Human).